The following is a 356-amino-acid chain: Mitogen-activated protein kinase PMK11 (356 aa).

Residues 24–312 (YDIQDVVGEG…VEEALKHPYL (289 aa)) enclose the Protein kinase domain. ATP is bound by residues 30-38 (VGEGAYGVV) and Lys-53.

This sequence belongs to the protein kinase superfamily. CMGC Ser/Thr protein kinase family. MAP kinase subfamily. Requires Mg(2+) as cofactor. Phosphorylated by MST7.

The catalysed reaction is L-seryl-[protein] + ATP = O-phospho-L-seryl-[protein] + ADP + H(+). It carries out the reaction L-threonyl-[protein] + ATP = O-phospho-L-threonyl-[protein] + ADP + H(+). In terms of biological role, mitogen-activated protein kinase; part of the MST11-MST7-PMK1 MAP kinase (MAPK) cascade that is essential for appressorium formation, penetration and invasive growth. Central regulator of appressorium development that acts downstream of the cAMP signal. The MST11-MST7-PMK1 MAP kinase cascade transduces signals from the cell surface sensors MDB2 and SHO1 that recognize various surface signals such as surface hydrophobicity, cutin monomers, and rice leaf waxes. Regulates expression of secreted fungal effector proteins implicated of host immune defenses, preventing reactive oxygen species generation and excessive callose deposition at plasmodesmata. Furthermore, controls the hyphal constriction required for fungal growth from one rice cell to the neighboring cell, enabling host tissue colonization and blast disease. Targets downstream of the PMK1-MAPK pathway include transcription factor MST12 and pathogenicity-related genes GAS1 and GAS2, both of which are expressed during appressorium formation, even if regulation of MST12 is not associated with expression of GAS1 or GAS2. The chain is Mitogen-activated protein kinase PMK11 from Pyricularia oryzae (strain 70-15 / ATCC MYA-4617 / FGSC 8958) (Rice blast fungus).